The sequence spans 153 residues: Pheromone-binding protein Gp-9 (153 aa).

Residues 1-19 form the signal peptide; that stretch reads MKTFVLHIFIFALVAFASA. Intrachain disulfides connect C37-C77, C73-C129, and C118-C138.

It belongs to the PBP/GOBP family. In terms of assembly, homodimer.

The protein localises to the secreted. Its function is as follows. Colony queen number, a major feature of social organization, is associated with worker genotype for Gp-9. Colonies are headed by either a single reproductive queen (monogyne form) or multiple queens (polygyne form). Differences in worker Gp-9 genotypes between social forms may cause differences in workers' abilities to recognize queens and regulate their numbers. This Solenopsis substituta (Fire ant) protein is Pheromone-binding protein Gp-9.